The sequence spans 278 residues: Putative cuticle collagen 91 (278 aa).

Disordered stretches follow at residues 84–109 and 140–278; these read LAKN…GVDG and GPAG…SVRQ. Residues 89–98 are compositionally biased toward pro residues; the sequence is PPGPPGPPGA. 3 triple-helical region regions span residues 91–120, 137–199, and 202–264; these read GPPG…DGVA, GEAG…NGQR, and GTPG…PGPD. Low complexity predominate over residues 99–109; the sequence is PGAAGEPGVDG. Over residues 158–167 the composition is skewed to gly residues; it reads GADGQGGAPG. 2 stretches are compositionally biased toward low complexity: residues 172-228 and 236-245; these read EGPA…AGAP and APGVDGQPGA.

This sequence belongs to the cuticular collagen family. As to quaternary structure, collagen polypeptide chains are complexed within the cuticle by disulfide bonds and other types of covalent cross-links.

Its function is as follows. Nematode cuticles are composed largely of collagen-like proteins. The cuticle functions both as an exoskeleton and as a barrier to protect the worm from its environment. The chain is Putative cuticle collagen 91 (col-91) from Caenorhabditis elegans.